A 186-amino-acid chain; its full sequence is Guanylate kinase (186 aa).

Residues 5 to 183 (GNLTVLTGPS…AFKEIEGFMG (179 aa)) enclose the Guanylate kinase-like domain. An ATP-binding site is contributed by 12–19 (GPSGVGKG).

Belongs to the guanylate kinase family.

The protein localises to the cytoplasm. It carries out the reaction GMP + ATP = GDP + ADP. Its function is as follows. Essential for recycling GMP and indirectly, cGMP. This Prochlorococcus marinus (strain NATL2A) protein is Guanylate kinase.